A 120-amino-acid chain; its full sequence is Transcription elongation factor SPT4 (120 aa).

The interaction with spt-5 stretch occupies residues 1–39 (MAASIPSDLRNLRACLLCSLIKSVDAFQTDGCENCDEVL). The C4-type zinc-finger motif lies at 15–35 (CLLCSLIKSVDAFQTDGCENC).

Belongs to the SPT4 family. Interacts with spt-5 to form DSIF. DSIF interacts with RNA polymerase II and with the positive transcription elongation factor b complex (P-TEFb complex), which is composed of cdk-9 and cyclin-T.

It is found in the nucleus. Its function is as follows. May function as a component of the DRB sensitivity-inducing factor complex (DSIF complex), which regulates transcription elongation by RNA polymerase II. DSIF may enhance transcriptional pausing at sites proximal to the promoter, which may in turn facilitate the assembly of an elongation competent RNA polymerase II complex. The chain is Transcription elongation factor SPT4 (spt-4) from Caenorhabditis briggsae.